A 34-amino-acid polypeptide reads, in one-letter code: Potassium channel toxin alpha-KTx 6.13 (34 aa).

4 disulfide bridges follow: cysteine 3/cysteine 24, cysteine 9/cysteine 29, cysteine 13/cysteine 31, and cysteine 19/cysteine 34. At cysteine 34 the chain carries Cysteine amide.

Belongs to the short scorpion toxin superfamily. Potassium channel inhibitor family. Alpha-KTx 06 subfamily. Expressed by the venom gland.

It localises to the secreted. Its function is as follows. Antagonist of Kv1/KCNA potassium channels. Shows a weak interaction with muscle-type nicotinic acetylcholine receptors (nAChR), since it inhibits alpha-bungarotoxin binding to both muscle-type nAChR from T.californica (IC(50)=490 nM). This suggests it probably weakly inhibits nAChR. This Heterometrus spinifer (Asia giant forest scorpion) protein is Potassium channel toxin alpha-KTx 6.13.